The following is a 124-amino-acid chain: MSAGQTYYEFYRGSSIGTALTDALDELITQGDIPPQLAMRVLQQFDKSLTECLQKGVKNKTTIKGHLSTYRLCDDVWTFVVKDPQFKMEGVGAGSEMVTGSKIKIVACKSGDAADGKKAGGARE.

Belongs to the TFIIA subunit 2 family. TFIIA is a heterodimer composed of the large TOA1 and the small TOA2 subunits.

The protein localises to the nucleus. In terms of biological role, TFIIA is a component of the transcription machinery of RNA polymerase II and plays an important role in transcriptional activation. TFIIA in a complex with tbp mediates transcriptional activity. The sequence is that of Transcription initiation factor IIA subunit 2 (TOA2) from Cryptococcus neoformans var. neoformans serotype D (strain JEC21 / ATCC MYA-565) (Filobasidiella neoformans).